The sequence spans 331 residues: Phosphoenolpyruvate transferase (331 aa).

D63 is a 7,8-didemethyl-8-hydroxy-5-deazariboflavin binding site.

This sequence belongs to the CofD family. In terms of assembly, homodimer. Mg(2+) is required as a cofactor.

The enzyme catalyses enolpyruvoyl-2-diphospho-5'-guanosine + 7,8-didemethyl-8-hydroxy-5-deazariboflavin = dehydro coenzyme F420-0 + GMP + H(+). The protein operates within cofactor biosynthesis; coenzyme F420 biosynthesis. Its function is as follows. Catalyzes the transfer of the phosphoenolpyruvate moiety from enoylpyruvoyl-2-diphospho-5'-guanosine (EPPG) to 7,8-didemethyl-8-hydroxy-5-deazariboflavin (FO) with the formation of dehydro coenzyme F420-0 and GMP. The protein is Phosphoenolpyruvate transferase of Mycobacterium sp. (strain KMS).